The primary structure comprises 446 residues: Phosphoglucosamine mutase (446 aa).

The active-site Phosphoserine intermediate is Ser-99. Mg(2+) contacts are provided by Ser-99, Asp-242, Asp-244, and Asp-246. The residue at position 99 (Ser-99) is a Phosphoserine.

The protein belongs to the phosphohexose mutase family. Mg(2+) is required as a cofactor. In terms of processing, activated by phosphorylation.

It carries out the reaction alpha-D-glucosamine 1-phosphate = D-glucosamine 6-phosphate. Catalyzes the conversion of glucosamine-6-phosphate to glucosamine-1-phosphate. In Wolinella succinogenes (strain ATCC 29543 / DSM 1740 / CCUG 13145 / JCM 31913 / LMG 7466 / NCTC 11488 / FDC 602W) (Vibrio succinogenes), this protein is Phosphoglucosamine mutase.